A 483-amino-acid polypeptide reads, in one-letter code: Glutathione reductase (483 aa).

Methionine 1 is modified (N-acetylmethionine). Leucine 2 is modified (N-acetylserine). Serine 33 and glycine 34 together coordinate FAD. Residue serine 33 coordinates glutathione. Position 40 (arginine 40) interacts with glutathione. FAD is bound by residues glutamate 53, threonine 60, cysteine 61, and lysine 69. Cysteine 61 and cysteine 66 form a disulfide bridge. Residue tyrosine 123 participates in glutathione binding. Alanine 139 contributes to the FAD binding site. Positions 205, 208, 211, 228, and 234 each coordinate NADP(+). Threonine 243 serves as a coordination point for glutathione. The N-linked (GlcNAc...) asparagine glycan is linked to asparagine 278. Position 294 (glycine 294) interacts with NADP(+). Aspartate 334 provides a ligand contact to FAD. Position 340 (glutamate 340) interacts with NADP(+). Threonine 342 is a binding site for FAD. Glutathione is bound at residue arginine 350. Valine 375 is a binding site for NADP(+). Glutathione is bound at residue lysine 425. FAD is bound at residue histidine 472. Residue histidine 472 is the Proton acceptor of the active site.

Belongs to the class-I pyridine nucleotide-disulfide oxidoreductase family. Homodimer. FAD is required as a cofactor.

The protein localises to the cytoplasm. Its subcellular location is the nucleus. The protein resides in the mitochondrion. It localises to the peroxisome. The catalysed reaction is 2 glutathione + NADP(+) = glutathione disulfide + NADPH + H(+). In terms of biological role, catalyzes the reduction of glutathione disulfide (GSSG) to reduced glutathione (GSH). Constitutes the major mechanism to maintain a high GSH:GSSG ratio in the cytosol. The sequence is that of Glutathione reductase from Saccharomyces cerevisiae (strain ATCC 204508 / S288c) (Baker's yeast).